The primary structure comprises 363 residues: UDP-N-acetylglucosamine--N-acetylmuramyl-(pentapeptide) pyrophosphoryl-undecaprenol N-acetylglucosamine transferase (363 aa).

Residues 10 to 12 (TGG), asparagine 124, serine 195, isoleucine 250, and glutamine 295 contribute to the UDP-N-acetyl-alpha-D-glucosamine site.

It belongs to the glycosyltransferase 28 family. MurG subfamily.

It is found in the cell membrane. It carries out the reaction di-trans,octa-cis-undecaprenyl diphospho-N-acetyl-alpha-D-muramoyl-L-alanyl-D-glutamyl-meso-2,6-diaminopimeloyl-D-alanyl-D-alanine + UDP-N-acetyl-alpha-D-glucosamine = di-trans,octa-cis-undecaprenyl diphospho-[N-acetyl-alpha-D-glucosaminyl-(1-&gt;4)]-N-acetyl-alpha-D-muramoyl-L-alanyl-D-glutamyl-meso-2,6-diaminopimeloyl-D-alanyl-D-alanine + UDP + H(+). Its pathway is cell wall biogenesis; peptidoglycan biosynthesis. Functionally, cell wall formation. Catalyzes the transfer of a GlcNAc subunit on undecaprenyl-pyrophosphoryl-MurNAc-pentapeptide (lipid intermediate I) to form undecaprenyl-pyrophosphoryl-MurNAc-(pentapeptide)GlcNAc (lipid intermediate II). This is UDP-N-acetylglucosamine--N-acetylmuramyl-(pentapeptide) pyrophosphoryl-undecaprenol N-acetylglucosamine transferase from Halalkalibacterium halodurans (strain ATCC BAA-125 / DSM 18197 / FERM 7344 / JCM 9153 / C-125) (Bacillus halodurans).